Here is a 226-residue protein sequence, read N- to C-terminus: ATP synthase subunit a (226 aa).

6 helical membrane-spanning segments follow: residues 17 to 37 (FSYFFHIGLVALIAVIVAMMA), 79 to 99 (LVATLGIIVFFSNIIGIIPGF), 105 to 125 (SLNLTLSLAIIVFVYYHFEGI), 134 to 154 (FAHFMGPIKLLAPLMFPIEIV), 176 to 196 (LFLMVILALVPYIAPLPAYVL), and 199 to 219 (FMAFLQAFIFMILTYVYLAGA).

The protein belongs to the ATPase A chain family. As to quaternary structure, F-type ATPases have 2 components, CF(1) - the catalytic core - and CF(0) - the membrane proton channel. CF(1) has five subunits: alpha(3), beta(3), gamma(1), delta(1), epsilon(1). CF(0) has three main subunits: a(1), b(2) and c(9-12). The alpha and beta chains form an alternating ring which encloses part of the gamma chain. CF(1) is attached to CF(0) by a central stalk formed by the gamma and epsilon chains, while a peripheral stalk is formed by the delta and b chains.

Its subcellular location is the cell inner membrane. Its function is as follows. Key component of the proton channel; it plays a direct role in the translocation of protons across the membrane. This is ATP synthase subunit a from Campylobacter jejuni subsp. jejuni serotype O:23/36 (strain 81-176).